Here is a 328-residue protein sequence, read N- to C-terminus: Malate dehydrogenase (328 aa).

12-18 (GAAGQIG) lines the NAD(+) pocket. Substrate-binding residues include Arg-95 and Arg-101. NAD(+) contacts are provided by residues Asn-108, Gln-115, and 132 to 134 (VGN). Substrate-binding residues include Asn-134 and Arg-165. His-190 acts as the Proton acceptor in catalysis.

The protein belongs to the LDH/MDH superfamily. MDH type 2 family.

The enzyme catalyses (S)-malate + NAD(+) = oxaloacetate + NADH + H(+). Its function is as follows. Catalyzes the reversible oxidation of malate to oxaloacetate. The polypeptide is Malate dehydrogenase (Polaromonas naphthalenivorans (strain CJ2)).